A 294-amino-acid chain; its full sequence is 4-diphosphocytidyl-2-C-methyl-D-erythritol kinase (294 aa).

Lys16 is an active-site residue. Position 99–109 (99–109) interacts with ATP; it reads PMGAGLGGGSS. Residue Asp141 is part of the active site.

This sequence belongs to the GHMP kinase family. IspE subfamily.

The enzyme catalyses 4-CDP-2-C-methyl-D-erythritol + ATP = 4-CDP-2-C-methyl-D-erythritol 2-phosphate + ADP + H(+). It functions in the pathway isoprenoid biosynthesis; isopentenyl diphosphate biosynthesis via DXP pathway; isopentenyl diphosphate from 1-deoxy-D-xylulose 5-phosphate: step 3/6. In terms of biological role, catalyzes the phosphorylation of the position 2 hydroxy group of 4-diphosphocytidyl-2C-methyl-D-erythritol. In Polynucleobacter asymbioticus (strain DSM 18221 / CIP 109841 / QLW-P1DMWA-1) (Polynucleobacter necessarius subsp. asymbioticus), this protein is 4-diphosphocytidyl-2-C-methyl-D-erythritol kinase.